Consider the following 387-residue polypeptide: MKLIQLYGDRGLTIVKGEAQYVWDIEGRRYLDFHTGIGVAFLGHRNPIILEYLKNQLENISILSTSFSTPIKDEMLQALDKVKPDKMDNAMLLNSGTEAVEAALKTARKITGRKKIIAFKNAFHGRTAGSLSVTWNKKYREPFEPLVGPVEFLTFNNIEDLSKIDNETAAVIVEPIQGESGVIPANIEFMKALKEKTENTGSLLIFDEIQTGFGRTGKLWAYKHYNIVPDILTAGKAIGGGFPVSVVFLPDHIANKLEEGDHGSTYGGNPMAMAAVTAACKVIEKENVVEQANQKGQQFSNILVKNLADLKVVREVRGKGLMIGIDIRFQPGQVLKYLQEKGILAVKAGSTVIRFLPSYLITYENMEEASNVLREGLLKIENKAVSS.

Pyridoxal 5'-phosphate is bound by residues 96–97 (GT) and Phe123. Arg126 serves as a coordination point for substrate. 207–210 (DEIQ) serves as a coordination point for pyridoxal 5'-phosphate. Lys236 is subject to N6-(pyridoxal phosphate)lysine. Ser264 lines the substrate pocket. Pyridoxal 5'-phosphate is bound at residue Thr265.

This sequence belongs to the class-III pyridoxal-phosphate-dependent aminotransferase family. LysJ subfamily. As to quaternary structure, homodimer. Requires pyridoxal 5'-phosphate as cofactor.

The protein resides in the cytoplasm. The enzyme catalyses [amino-group carrier protein]-C-terminal-gamma-(L-lysyl)-L-glutamate + 2-oxoglutarate = [amino-group carrier protein]-C-terminal-N-(1-carboxy-5-oxopentan-1-yl)-L-glutamine + L-glutamate. The catalysed reaction is [amino-group carrier protein]-C-terminal-gamma-(L-ornithyl)-L-glutamate + 2-oxoglutarate = [amino-group carrier protein]-C-terminal-gamma-(L-glutamyl-5-semialdehyde)-L-glutamate + L-glutamate. Its pathway is amino-acid biosynthesis; L-lysine biosynthesis via AAA pathway; L-lysine from L-alpha-aminoadipate (Thermus route): step 4/5. It functions in the pathway amino-acid biosynthesis; L-arginine biosynthesis. In terms of biological role, involved in both the arginine and lysine biosynthetic pathways. In Sulfolobus acidocaldarius (strain ATCC 33909 / DSM 639 / JCM 8929 / NBRC 15157 / NCIMB 11770), this protein is [LysW]-aminoadipate semialdehyde/glutamate semialdehyde transaminase.